Here is a 96-residue protein sequence, read N- to C-terminus: UPF0235 protein VCM66_0443 (96 aa).

This sequence belongs to the UPF0235 family.

This chain is UPF0235 protein VCM66_0443, found in Vibrio cholerae serotype O1 (strain M66-2).